The chain runs to 363 residues: UDP-N-acetylglucosamine--N-acetylmuramyl-(pentapeptide) pyrophosphoryl-undecaprenol N-acetylglucosamine transferase (363 aa).

UDP-N-acetyl-alpha-D-glucosamine is bound by residues 10-12 (TGG), asparagine 124, serine 195, isoleucine 250, and glutamine 295.

This sequence belongs to the glycosyltransferase 28 family. MurG subfamily.

It localises to the cell membrane. The catalysed reaction is di-trans,octa-cis-undecaprenyl diphospho-N-acetyl-alpha-D-muramoyl-L-alanyl-D-glutamyl-meso-2,6-diaminopimeloyl-D-alanyl-D-alanine + UDP-N-acetyl-alpha-D-glucosamine = di-trans,octa-cis-undecaprenyl diphospho-[N-acetyl-alpha-D-glucosaminyl-(1-&gt;4)]-N-acetyl-alpha-D-muramoyl-L-alanyl-D-glutamyl-meso-2,6-diaminopimeloyl-D-alanyl-D-alanine + UDP + H(+). It functions in the pathway cell wall biogenesis; peptidoglycan biosynthesis. Its function is as follows. Cell wall formation. Catalyzes the transfer of a GlcNAc subunit on undecaprenyl-pyrophosphoryl-MurNAc-pentapeptide (lipid intermediate I) to form undecaprenyl-pyrophosphoryl-MurNAc-(pentapeptide)GlcNAc (lipid intermediate II). The chain is UDP-N-acetylglucosamine--N-acetylmuramyl-(pentapeptide) pyrophosphoryl-undecaprenol N-acetylglucosamine transferase from Listeria welshimeri serovar 6b (strain ATCC 35897 / DSM 20650 / CCUG 15529 / CIP 8149 / NCTC 11857 / SLCC 5334 / V8).